Reading from the N-terminus, the 75-residue chain is Putative defensin-like protein 55 (75 aa).

Residues 1-19 form the signal peptide; that stretch reads MNITKAYVIFFLVVILTNS. Cystine bridges form between cysteine 39–cysteine 73, cysteine 43–cysteine 66, cysteine 52–cysteine 71, and cysteine 56–cysteine 72.

Belongs to the DEFL family.

It localises to the secreted. The protein is Putative defensin-like protein 55 of Arabidopsis thaliana (Mouse-ear cress).